A 129-amino-acid chain; its full sequence is Small ribosomal subunit protein uS12 (129 aa).

Residues 1–25 (MPTYNQLVRFGRKSKTRKTKSPALE) form a disordered region. A compositionally biased stretch (basic residues) spans 10 to 20 (FGRKSKTRKTK). Residue D89 is modified to 3-methylthioaspartic acid. The segment at 110 to 129 (RKQGRSRYGAPSKQVAVTKK) is disordered.

Belongs to the universal ribosomal protein uS12 family. As to quaternary structure, part of the 30S ribosomal subunit. Contacts proteins S8 and S17. May interact with IF1 in the 30S initiation complex.

With S4 and S5 plays an important role in translational accuracy. Its function is as follows. Interacts with and stabilizes bases of the 16S rRNA that are involved in tRNA selection in the A site and with the mRNA backbone. Located at the interface of the 30S and 50S subunits, it traverses the body of the 30S subunit contacting proteins on the other side and probably holding the rRNA structure together. The combined cluster of proteins S8, S12 and S17 appears to hold together the shoulder and platform of the 30S subunit. This is Small ribosomal subunit protein uS12 from Rickettsia canadensis (strain McKiel).